Consider the following 62-residue polypeptide: Small, acid-soluble spore protein H 1 (62 aa).

Belongs to the SspH family.

It localises to the spore core. This chain is Small, acid-soluble spore protein H 1, found in Clostridium botulinum (strain ATCC 19397 / Type A).